We begin with the raw amino-acid sequence, 573 residues long: 60 kDa heat shock protein, mitochondrial (573 aa).

The transit peptide at 1 to 26 (MLRLPTVFRQMRPVSRVLAPHLTRAY) directs the protein to the mitochondrion. Lys31 carries the post-translational modification N6-succinyllysine. Residues Ser67 and Ser70 each carry the phosphoserine modification. Lys75 is an ATP binding site. Lys75 is subject to N6-acetyllysine. At Lys82 the chain carries N6-acetyllysine; alternate. Residue Lys82 is modified to N6-succinyllysine; alternate. Position 87 is an N6-acetyllysine (Lys87). Tyr90 carries the phosphotyrosine modification. Lys91 is subject to N6-acetyllysine. Position 111–115 (111–115 (DGTTT)) interacts with ATP. N6-acetyllysine; alternate is present on Lys125. Lys125 is subject to N6-succinyllysine; alternate. Lys130 carries the N6-acetyllysine modification. The residue at position 133 (Lys133) is an N6-acetyllysine; alternate. The residue at position 133 (Lys133) is an N6-succinyllysine; alternate. Residue Lys133 is modified to N6-malonyllysine; alternate. At Lys156 the chain carries N6-acetyllysine. Lys191, Lys202, Lys205, Lys218, and Lys236 each carry N6-acetyllysine; alternate. Residues Lys191, Lys202, Lys205, Lys218, and Lys236 each carry the N6-succinyllysine; alternate modification. Position 249 is an N6-acetyllysine (Lys249). Lys250 carries the N6-acetyllysine; alternate modification. N6-succinyllysine; alternate is present on Lys250. Residues Lys269 and Lys292 each carry the N6-acetyllysine modification. Lys301 is modified (N6-succinyllysine). Lys314 carries the post-translational modification N6-acetyllysine. N6-acetyllysine; alternate is present on Lys352. At Lys352 the chain carries N6-succinyllysine; alternate. N6-acetyllysine is present on Lys389. An N6-acetyllysine; alternate modification is found at Lys396. Lys396 is modified (N6-succinyllysine; alternate). Ser410 bears the Phosphoserine mark. Position 440 (Gly440) interacts with ATP. Residue Lys469 is modified to N6-acetyllysine. Lys481 bears the N6-acetyllysine; alternate mark. Lys481 is modified (N6-succinyllysine; alternate). At Ser488 the chain carries Phosphoserine. Asp520 lines the ATP pocket. Residue Lys551 forms a Glycyl lysine isopeptide (Lys-Gly) (interchain with G-Cter in SUMO2) linkage.

This sequence belongs to the chaperonin (HSP60) family. As to quaternary structure, homoheptamer arranged in a ring structure. The functional units of these chaperonins consist of heptameric rings of the large subunit Hsp60, which function as a back-to-back double ring. Interacts with 2 heptameric Hsp10 rings to form the symmetrical football complex. Interacts with HRAS. Interacts with ATAD3A. Interacts with ETFBKMT and EEF1AKMT3. Interacts with MFHAS1.

It is found in the mitochondrion matrix. The catalysed reaction is ATP + H2O + a folded polypeptide = ADP + phosphate + an unfolded polypeptide.. In terms of biological role, chaperonin implicated in mitochondrial protein import and macromolecular assembly. Together with Hsp10, facilitates the correct folding of imported proteins. May also prevent misfolding and promote the refolding and proper assembly of unfolded polypeptides generated under stress conditions in the mitochondrial matrix. The functional units of these chaperonins consist of heptameric rings of the large subunit Hsp60, which function as a back-to-back double ring. In a cyclic reaction, Hsp60 ring complexes bind one unfolded substrate protein per ring, followed by the binding of ATP and association with 2 heptameric rings of the co-chaperonin Hsp10. This leads to sequestration of the substrate protein in the inner cavity of Hsp60 where, for a certain period of time, it can fold undisturbed by other cell components. Synchronous hydrolysis of ATP in all Hsp60 subunits results in the dissociation of the chaperonin rings and the release of ADP and the folded substrate protein. The protein is 60 kDa heat shock protein, mitochondrial (HSPD1) of Pongo abelii (Sumatran orangutan).